The primary structure comprises 246 residues: Alpha-amylase inhibitor 1 (246 aa).

An N-terminal signal peptide occupies residues 1–23 (MIMASSKLLSLALFLALLSHANS). 3 N-linked (GlcNAc...) asparagine glycosylation sites follow: Asn-35, Asn-88, and Asn-163. The propeptide occupies 240–246 (IVLNKIL).

Belongs to the leguminous lectin family. In terms of assembly, heterodimer of chain 1 and chain 2. Proteolytic processing yields active form.

In terms of biological role, lectin and alpha-amylase inhibitor. Acts as a defensive protein against insects. This chain is Alpha-amylase inhibitor 1 (LLP), found in Phaseolus vulgaris (Kidney bean).